The sequence spans 180 residues: Small ribosomal subunit protein bS16 (180 aa).

This sequence belongs to the bacterial ribosomal protein bS16 family.

This chain is Small ribosomal subunit protein bS16, found in Flavobacterium psychrophilum (strain ATCC 49511 / DSM 21280 / CIP 103535 / JIP02/86).